The sequence spans 607 residues: 2-isopropylmalate synthase (607 aa).

Polar residues predominate over residues 1-10; that stretch reads MASFSESLSQ. A disordered region spans residues 1-40; it reads MASFSESLSQDPADAYKSAPSITKPMGPPSPGQPQWNPQR. The 275-residue stretch at 75–349 folds into the Pyruvate carboxyltransferase domain; it reads PLWCAVDLRD…DPQIDFSNID (275 aa). Mg(2+) is bound by residues Asp84, His288, His290, and Asn324. Residues 491–607 are regulatory domain; it reads PVQPLERIKQ…VSAVNRAMPR (117 aa).

This sequence belongs to the alpha-IPM synthase/homocitrate synthase family. LeuA type 2 subfamily. In terms of assembly, homodimer. It depends on Mg(2+) as a cofactor.

The protein resides in the cytoplasm. The catalysed reaction is 3-methyl-2-oxobutanoate + acetyl-CoA + H2O = (2S)-2-isopropylmalate + CoA + H(+). The protein operates within amino-acid biosynthesis; L-leucine biosynthesis; L-leucine from 3-methyl-2-oxobutanoate: step 1/4. Catalyzes the condensation of the acetyl group of acetyl-CoA with 3-methyl-2-oxobutanoate (2-ketoisovalerate) to form 3-carboxy-3-hydroxy-4-methylpentanoate (2-isopropylmalate). The polypeptide is 2-isopropylmalate synthase (Mycobacterium leprae (strain TN)).